The primary structure comprises 209 residues: Large ribosomal subunit protein uL4 (209 aa).

The disordered stretch occupies residues 45-78 (RQGTHKAKERAEVAGSTRKIKKQKGTGTARAGSA).

Belongs to the universal ribosomal protein uL4 family. Part of the 50S ribosomal subunit.

Functionally, one of the primary rRNA binding proteins, this protein initially binds near the 5'-end of the 23S rRNA. It is important during the early stages of 50S assembly. It makes multiple contacts with different domains of the 23S rRNA in the assembled 50S subunit and ribosome. Its function is as follows. Forms part of the polypeptide exit tunnel. This is Large ribosomal subunit protein uL4 from Flavobacterium psychrophilum (strain ATCC 49511 / DSM 21280 / CIP 103535 / JIP02/86).